The chain runs to 379 residues: DNA replication and repair protein RecF (379 aa).

30-37 is an ATP binding site; that stretch reads GDNAQGKS.

This sequence belongs to the RecF family.

It is found in the cytoplasm. Functionally, the RecF protein is involved in DNA metabolism; it is required for DNA replication and normal SOS inducibility. RecF binds preferentially to single-stranded, linear DNA. It also seems to bind ATP. The chain is DNA replication and repair protein RecF from Thermosynechococcus vestitus (strain NIES-2133 / IAM M-273 / BP-1).